A 458-amino-acid polypeptide reads, in one-letter code: Histone acetyltransferase KAT8 (458 aa).

Composition is skewed to low complexity over residues 1–17 (MAAQ…TSGT) and 25–35 (PGENAAVEGPA). Residues 1 to 52 (MAAQGATAAVAATTSGTVGEGEPGPGENAAVEGPARSPGRVSPPTPARGEPE) are disordered. N-acetylalanine is present on Ala-2. Residues Ser-37 and Ser-42 each carry the phosphoserine modification. Positions 55–110 (VEIGETYLCRRPDSTWHSAEVIQSRVNDQEGREEFYVHYVGFNRRLDEWVDKNRLA) constitute a Tudor-knot domain. The residue at position 113 (Lys-113) is an N6-acetyllysine. The Nuclear localization signal signature appears at 140 to 149 (RNQKRKHDEI). The region spanning 174–447 (TKVKYVDKIH…VDSVCLKWAP (274 aa)) is the MYST-type HAT domain. A sufficient for interaction with KANSL1 region spans residues 174–458 (TKVKYVDKIH…KHKQVKLSKK (285 aa)). A C2HC MYST-type zinc finger spans residues 207–232 (LWLCEYCLKYMKFEKSYRFHLGQCQW). Zn(2+)-binding residues include Cys-210, Cys-213, His-226, and Cys-230. Lys-274 carries the post-translational modification N6-acetyllysine. Positions 317, 319, 325, 326, 327, 329, and 330 each coordinate acetyl-CoA. Residue Ser-348 is modified to Phosphoserine. Glu-350 serves as the catalytic Proton donor/acceptor. The acetyl-CoA site is built by Ser-354, Ser-363, Tyr-408, and Lys-432.

The protein belongs to the MYST (SAS/MOZ) family. In terms of assembly, component of a multisubunit histone acetyltransferase complex (MSL) at least composed of the MOF/KAT8, MSL1/hampin, MSL2L1 and MSL3L1. Component of the NSL complex at least composed of MOF/KAT8, KANSL1, KANSL2, KANSL3, MCRS1, PHF20, OGT1/OGT, WDR5 and HCFC1. Component of some MLL1/MLL complex, at least composed of the core components KMT2A/MLL1, ASH2L, HCFC1, WDR5 and RBBP5, as well as the facultative components BACC1, CHD8, E2F6, HSP70, INO80C, KANSL1, LAS1L, MAX, MCRS1, MGA, MOF/KAT8, PELP1, PHF20, PRP31, RING2, RUVB1/TIP49A, RUVB2/TIP49B, SENP3, TAF1, TAF4, TAF6, TAF7, TAF9 and TEX10. Interacts with the chromodomain of MORF4L1/MRG15. Interacts with ATM (via its Tudor-knot domain); possibly regulating the activity of ATM. Interacts with NELFD. Post-translationally, acetylation at Lys-274 facilitates cognate substrate Lys-binding and acetylation. Although considered as an autoacetylation event, acetylation at Lys-274 probably takes place via a non-enzymatic process following acetyl-CoA-binding, which primes KAT8 for cognate protein-lysine acetylation. During oocyte development, expressed in both oocytes and granulosa cells.

It localises to the nucleus. It is found in the chromosome. The protein resides in the mitochondrion. The catalysed reaction is L-lysyl-[histone] + acetyl-CoA = N(6)-acetyl-L-lysyl-[histone] + CoA + H(+). The enzyme catalyses L-lysyl-[protein] + acetyl-CoA = N(6)-acetyl-L-lysyl-[protein] + CoA + H(+). It catalyses the reaction propanoyl-CoA + L-lysyl-[protein] = N(6)-propanoyl-L-lysyl-[protein] + CoA + H(+). With respect to regulation, the acetyltransferase activity is inhibited by anacardic acid derivatives. Its function is as follows. Histone acetyltransferase that catalyzes histone H4 acetylation at 'Lys-5'- and 'Lys-8' (H4K5ac and H4K8ac) or 'Lys-16' (H4K16ac), depending on the context. Catalytic component of the MSL histone acetyltransferase complex, a multiprotein complex that mediates the majority of histone H4 acetylation at 'Lys-16' (H4K16ac), an epigenetic mark that prevents chromatin compaction. H4K16ac constitutes the only acetylation mark intergenerationally transmitted and regulates key biological processes, such as oogenesis, embryonic stem cell pluripotency, hematopoiesis or glucose metabolism. The MSL complex is required for chromosome stability and genome integrity by maintaining homeostatic levels of H4K16ac. The MSL complex is also involved in gene dosage by promoting up-regulation of genes expressed by the X chromosome. X up-regulation is required to compensate for autosomal biallelic expression. The MSL complex also participates in gene dosage compensation by promoting expression of Tsix non-coding RNA. As part of the NSL histone acetyltransferase complex, catalyzes histone H4 acetylation at 'Lys-5'- and 'Lys-8' (H4K5ac and H4K8ac) at transcription start sites and promotes transcription initiation. The NSL complex also acts as a regulator of gene expression in mitochondria: KAT8 associates with mitochondrial DNA and controls expression of respiratory genes in an acetyltransferase-dependent mechanism. Also functions as an acetyltransferase for non-histone targets, such as ALKBH5, COX17, IRF3, KDM1A/LSD1, LMNA, PAX7 or TP53/p53. Acts as an inhibitor of antiviral immunity by acetylating IRF3, preventing IRF3 recruitment to promoters. Acts as a regulator of asymmetric division in muscle stem cells by mediating acetylation of PAX7. As part of the NSL complex, acetylates TP53/p53 at 'Lys-120'. Acts as a regulator of epithelial-to-mesenchymal transition as part of the NSL complex by mediating acetylation of KDM1A/LSD1. The NSL complex is required for nuclear architecture maintenance by mediating acetylation of LMNA. Promotes mitochondrial integrity by catalyzing acetylation of COX17. In addition to protein acetyltransferase activity, able to mediate protein propionylation. The chain is Histone acetyltransferase KAT8 from Mus musculus (Mouse).